Consider the following 209-residue polypeptide: Thymidylate kinase (209 aa).

Residue 10-17 coordinates ATP; that stretch reads GPEGAGKT.

Belongs to the thymidylate kinase family.

It carries out the reaction dTMP + ATP = dTDP + ADP. Its function is as follows. Phosphorylation of dTMP to form dTDP in both de novo and salvage pathways of dTTP synthesis. This Anoxybacillus flavithermus (strain DSM 21510 / WK1) protein is Thymidylate kinase.